We begin with the raw amino-acid sequence, 282 residues long: Large ribosomal subunit protein uL2c (282 aa).

Positions 230–261 (SAQNAVDHPHGGGEGKAPIGRIPSTPWGKPAL) are disordered.

This sequence belongs to the universal ribosomal protein uL2 family. Part of the 50S ribosomal subunit.

The protein localises to the plastid. In Helicosporidium sp. subsp. Simulium jonesii (Green alga), this protein is Large ribosomal subunit protein uL2c (rpl2).